Consider the following 193-residue polypeptide: Segregation and condensation protein B (193 aa).

Belongs to the ScpB family. In terms of assembly, homodimer. Homodimerization may be required to stabilize the binding of ScpA to the Smc head domains. Component of a cohesin-like complex composed of ScpA, ScpB and the Smc homodimer, in which ScpA and ScpB bind to the head domain of Smc. The presence of the three proteins is required for the association of the complex with DNA.

The protein localises to the cytoplasm. Its function is as follows. Participates in chromosomal partition during cell division. May act via the formation of a condensin-like complex containing Smc and ScpA that pull DNA away from mid-cell into both cell halves. The protein is Segregation and condensation protein B of Clostridium botulinum (strain ATCC 19397 / Type A).